The primary structure comprises 377 residues: Glutamate 5-kinase (377 aa).

Lys-22 is a binding site for ATP. Residues Ser-62, Asp-149, and Asn-161 each coordinate substrate. Residues 181–182 (TD) and 223–229 (TGGMVTK) each bind ATP. Residues 285-363 (RGAIVVDAGA…AQLKRFLGPQ (79 aa)) enclose the PUA domain.

It belongs to the glutamate 5-kinase family.

Its subcellular location is the cytoplasm. The enzyme catalyses L-glutamate + ATP = L-glutamyl 5-phosphate + ADP. The protein operates within amino-acid biosynthesis; L-proline biosynthesis; L-glutamate 5-semialdehyde from L-glutamate: step 1/2. Catalyzes the transfer of a phosphate group to glutamate to form L-glutamate 5-phosphate. This Bifidobacterium longum subsp. infantis (strain ATCC 15697 / DSM 20088 / JCM 1222 / NCTC 11817 / S12) protein is Glutamate 5-kinase.